Consider the following 189-residue polypeptide: Interferon alpha-16 (189 aa).

A signal peptide spans 1 to 23; the sequence is MALSFSLLMAVLVLSYKSICSLG. Intrachain disulfides connect cysteine 24–cysteine 122 and cysteine 52–cysteine 162.

It belongs to the alpha/beta interferon family.

The protein localises to the secreted. Produced by macrophages, IFN-alpha have antiviral activities. Interferon stimulates the production of two enzymes: a protein kinase and an oligoadenylate synthetase. This Homo sapiens (Human) protein is Interferon alpha-16 (IFNA16).